Reading from the N-terminus, the 879-residue chain is Leucine--tRNA ligase (879 aa).

The 'HIGH' region motif lies at 43 to 53; sequence PYPSGRIHMGH. The 'KMSKS' region motif lies at 636–640; the sequence is KMSKS. Lysine 639 lines the ATP pocket.

This sequence belongs to the class-I aminoacyl-tRNA synthetase family.

It is found in the cytoplasm. It carries out the reaction tRNA(Leu) + L-leucine + ATP = L-leucyl-tRNA(Leu) + AMP + diphosphate. In Afipia carboxidovorans (strain ATCC 49405 / DSM 1227 / KCTC 32145 / OM5) (Oligotropha carboxidovorans), this protein is Leucine--tRNA ligase.